The primary structure comprises 274 residues: Leucyl/phenylalanyl-tRNA--protein transferase (274 aa).

It belongs to the L/F-transferase family.

It is found in the cytoplasm. The enzyme catalyses N-terminal L-lysyl-[protein] + L-leucyl-tRNA(Leu) = N-terminal L-leucyl-L-lysyl-[protein] + tRNA(Leu) + H(+). It carries out the reaction N-terminal L-arginyl-[protein] + L-leucyl-tRNA(Leu) = N-terminal L-leucyl-L-arginyl-[protein] + tRNA(Leu) + H(+). The catalysed reaction is L-phenylalanyl-tRNA(Phe) + an N-terminal L-alpha-aminoacyl-[protein] = an N-terminal L-phenylalanyl-L-alpha-aminoacyl-[protein] + tRNA(Phe). In terms of biological role, functions in the N-end rule pathway of protein degradation where it conjugates Leu, Phe and, less efficiently, Met from aminoacyl-tRNAs to the N-termini of proteins containing an N-terminal arginine or lysine. In Psychrobacter cryohalolentis (strain ATCC BAA-1226 / DSM 17306 / VKM B-2378 / K5), this protein is Leucyl/phenylalanyl-tRNA--protein transferase.